Here is a 673-residue protein sequence, read N- to C-terminus: DNA ligase (673 aa).

Residues 34–38 (DAEYD), 83–84 (SL), and E116 each bind NAD(+). The active-site N6-AMP-lysine intermediate is the K118. NAD(+)-binding residues include R139, E176, K293, and K317. The Zn(2+) site is built by C411, C414, C429, and C435. Residues 595–673 (NQQNPFFGKT…EDEFLKWVNS (79 aa)) enclose the BRCT domain.

Belongs to the NAD-dependent DNA ligase family. LigA subfamily. Requires Mg(2+) as cofactor. Mn(2+) is required as a cofactor.

The catalysed reaction is NAD(+) + (deoxyribonucleotide)n-3'-hydroxyl + 5'-phospho-(deoxyribonucleotide)m = (deoxyribonucleotide)n+m + AMP + beta-nicotinamide D-nucleotide.. Functionally, DNA ligase that catalyzes the formation of phosphodiester linkages between 5'-phosphoryl and 3'-hydroxyl groups in double-stranded DNA using NAD as a coenzyme and as the energy source for the reaction. It is essential for DNA replication and repair of damaged DNA. This is DNA ligase from Legionella pneumophila (strain Paris).